The sequence spans 1088 residues: Tyrocidine synthase 1 (1088 aa).

Residues 528–602 (PPRTETESIL…QVALFVKSTT (75 aa)) enclose the Carrier domain. An O-(pantetheine 4'-phosphoryl)serine modification is found at Ser-563.

Belongs to the ATP-dependent AMP-binding enzyme family. As to quaternary structure, large multienzyme complex of TycA, TycB and TycC. The cofactor is pantetheine 4'-phosphate.

The enzyme catalyses L-phenylalanine + ATP + H2O = D-phenylalanine + AMP + diphosphate + H(+). Its pathway is antibiotic biosynthesis; tyrocidine biosynthesis. Its function is as follows. In the first step of peptide synthesis this enzyme activates phenylalanine and racemizes it to the D-isomer. The sequence is that of Tyrocidine synthase 1 (tycA) from Brevibacillus parabrevis.